A 266-amino-acid chain; its full sequence is Dolichol-phosphate mannosyltransferase subunit 1 (266 aa).

Residues 1-19 are compositionally biased toward low complexity; it reads MASPGASRGASAATAAAAS. The tract at residues 1–31 is disordered; that stretch reads MASPGASRGASAATAAAASPRPPQGRSSRRD. Ala-2 is modified (N-acetylalanine). At Ser-3 the chain carries Phosphoserine. Residues Pro-38, Tyr-40, Glu-42, Ile-69, Asp-71, Asp-124, Ala-125, Asp-126, Arg-153, Arg-240, and Lys-246 each coordinate GDP-alpha-D-mannose. Position 126 (Asp-126) interacts with Mg(2+). Asp-126 provides a ligand contact to Mn(2+).

Belongs to the glycosyltransferase 2 family. In terms of assembly, component of the dolichol-phosphate mannose (DPM) synthase complex composed of DPM1, DPM2 and DPM3; within the complex, directly interacts with DPM3. This interaction may stabilize DPM1. Mg(2+) is required as a cofactor. The cofactor is Mn(2+). Requires Ca(2+) as cofactor.

The protein resides in the endoplasmic reticulum. It carries out the reaction a di-trans,poly-cis-dolichyl phosphate + GDP-alpha-D-mannose = a di-trans,poly-cis-dolichyl beta-D-mannosyl phosphate + GDP. Its pathway is protein modification; protein glycosylation. Its function is as follows. Transfers mannose from GDP-mannose to dolichol monophosphate to form dolichol phosphate mannose (Dol-P-Man) which is the mannosyl donor in pathways leading to N-glycosylation, glycosyl phosphatidylinositol membrane anchoring, and O-mannosylation of proteins; catalytic subunit of the dolichol-phosphate mannose (DPM) synthase complex. The chain is Dolichol-phosphate mannosyltransferase subunit 1 (DPM1) from Cricetulus griseus (Chinese hamster).